Reading from the N-terminus, the 237-residue chain is Endonuclease V (237 aa).

Positions 46 and 114 each coordinate Mg(2+).

It belongs to the endonuclease V family. It depends on Mg(2+) as a cofactor.

The protein localises to the cytoplasm. The enzyme catalyses Endonucleolytic cleavage at apurinic or apyrimidinic sites to products with a 5'-phosphate.. Functionally, DNA repair enzyme involved in the repair of deaminated bases. Selectively cleaves double-stranded DNA at the second phosphodiester bond 3' to a deoxyinosine leaving behind the intact lesion on the nicked DNA. This chain is Endonuclease V, found in Xanthomonas axonopodis pv. citri (strain 306).